A 609-amino-acid chain; its full sequence is Alpha-fetoprotein (609 aa).

The signal sequence occupies residues 1 to 18 (MKWVESIFLIFLLNFTES). 3 consecutive Albumin domains span residues 19-210 (RTLH…ATVT), 211-402 (KELR…EELQ), and 403-601 (KYIQ…KLIS). Position 22 (histidine 22) interacts with Cu(2+). Cystine bridges form between cysteine 99–cysteine 114, cysteine 113–cysteine 124, cysteine 148–cysteine 193, cysteine 192–cysteine 201, cysteine 224–cysteine 270, cysteine 269–cysteine 277, cysteine 289–cysteine 303, and cysteine 302–cysteine 313. Serine 111, serine 115, and serine 117 each carry phosphoserine. A glycan (N-linked (GlcNAc...) asparagine) is linked at asparagine 251. Serine 344 carries the phosphoserine modification. Disulfide bonds link cysteine 384/cysteine 393, cysteine 416/cysteine 462, cysteine 461/cysteine 472, cysteine 485/cysteine 501, cysteine 500/cysteine 511, cysteine 538/cysteine 583, and cysteine 582/cysteine 591. A Phosphoserine modification is found at serine 444.

Belongs to the ALB/AFP/VDB family. As to quaternary structure, dimeric and trimeric forms have been found in addition to the monomeric form. Sulfated. As to expression, plasma.

The protein resides in the secreted. Functionally, binds copper, nickel, and fatty acids as well as, and bilirubin less well than, serum albumin. This Gorilla gorilla gorilla (Western lowland gorilla) protein is Alpha-fetoprotein (AFP).